Reading from the N-terminus, the 437-residue chain is RNA-binding motif, single-stranded-interacting protein 3 (437 aa).

The disordered stretch occupies residues 28-57 (YAPAPHPMAPPSPSTNSSSNNSSNNSSGEQ). The span at 31 to 40 (APHPMAPPSP) shows a compositional bias: pro residues. A compositionally biased stretch (low complexity) spans 41 to 54 (STNSSSNNSSNNSS). RRM domains lie at 61–134 (TNLY…MAKQ) and 140–225 (TNLY…FADG). The span at 399–422 (TSPQTVAPSSQDTSGQQQQIAVDT) shows a compositional bias: polar residues. The disordered stretch occupies residues 399–437 (TSPQTVAPSSQDTSGQQQQIAVDTSNEHAPAYSYQQSKP).

As to expression, expressed in fetal brain, fetal lung, fetal liver, heart, brain, placenta, lung, liver, muscle, kidney and pancreas.

It is found in the cytoplasm. Binds poly(A) and poly(U) oligoribonucleotides. The sequence is that of RNA-binding motif, single-stranded-interacting protein 3 (RBMS3) from Homo sapiens (Human).